A 760-amino-acid polypeptide reads, in one-letter code: General transcription and DNA repair factor IIH helicase subunit XPD (760 aa).

In terms of domain architecture, Helicase ATP-binding spans 7-283; it reads GLLVYFPYDY…KETDEQRLRD (277 aa). ATP is bound at residue 42–49; that stretch reads MPSGTGKT. Positions 116, 134, 155, and 190 each coordinate [4Fe-4S] cluster. A DEAH box motif is present at residues 234 to 237; the sequence is DEAH. A mediates interaction with MMS19 region spans residues 438–637; the sequence is MDASLAIKPV…TQSRILKARL (200 aa). The short motif at 682-695 is the Nuclear localization signal element; the sequence is KRFARGDKRGKLPR.

Belongs to the helicase family. RAD3/XPD subfamily. As to quaternary structure, component of the 7-subunit TFIIH core complex composed of XPB/ERCC3, XPD/ERCC2, GTF2H1, GTF2H2, GTF2H3, GTF2H4 and GTF2H5, which is active in NER. The core complex associates with the 3-subunit CDK-activating kinase (CAK) module composed of CCNH/cyclin H, CDK7 and MNAT1 to form the 10-subunit holoenzyme (holo-TFIIH) active in transcription. Interacts with GTF2H2 (p44) which stimulates the 5'-3' helicase activity of this subunit. Component of the MMXD complex, which includes CIAO1, ERCC2, CIAO2B, MMS19 and SLC25A5. Interacts with CIAO1 and CIAO2B; the interaction WITH CIAO2B is direct. Interacts with ATF7IP. Interacts directly with MMS19. Part of TBP-based Pol II pre-initiation complex (PIC), in which Pol II core assembles with general transcription factors and other specific initiation factors including GTF2E1, GTF2E2, GTF2F1, GTF2F2, TCEA1, ERCC2, ERCC3, GTF2H2, GTF2H3, GTF2H4, GTF2H5, GTF2A1, GTF2A2, GTF2B and TBP; this large multi-subunit PIC complex mediates DNA unwinding and targets Pol II core to the transcription start site where the first phosphodiester bond forms. In terms of assembly, (Microbial infection) Interacts with Epstein-Barr virus EBNA2. Mg(2+) serves as cofactor. [4Fe-4S] cluster is required as a cofactor. In terms of processing, ISGylated.

The protein localises to the nucleus. The protein resides in the cytoplasm. It is found in the cytoskeleton. It localises to the spindle. It carries out the reaction Couples ATP hydrolysis with the unwinding of duplex DNA at the replication fork by translocating in the 5'-3' direction. This creates two antiparallel DNA single strands (ssDNA). The leading ssDNA polymer is the template for DNA polymerase III holoenzyme which synthesizes a continuous strand.. The catalysed reaction is ATP + H2O = ADP + phosphate + H(+). With respect to regulation, interaction with GTF2H2 (p44) results in stimulation of the 5'-3' helicase activity of this subunit. DNA unwinding by this subunit in TFIIH is stimulated 4-fold by XPA and 20-fold by ERCC5/XPG. Functionally, ATP-dependent 5'-3' DNA helicase. Component of the general transcription and DNA repair factor IIH (TFIIH) core complex, not absolutely essential for minimal transcription in vitro. Required for transcription-coupled nucleotide excision repair (NER) of damaged DNA; recognizes damaged bases. Sequestered in chromatin on UV-damaged DNA. When complexed to CDK-activating kinase (CAK), involved in transcription by RNA polymerase II. In NER, TFIIH acts by opening DNA around the lesion to allow the excision of the damaged oligonucleotide and its replacement by a new DNA fragment. The ATP-dependent helicase activity of XPD/ERCC2 is required for DNA opening. Involved in DNA lesion verification. In transcription, TFIIH has an essential role in transcription initiation. When the pre-initiation complex (PIC) has been established, TFIIH is required for promoter opening and promoter escape. Phosphorylation of the C-terminal tail (CTD) of the largest subunit of RNA polymerase II by the kinase module CAK controls the initiation of transcription. XPD/ERCC2 acts by forming a bridge between CAK and the core-TFIIH complex. The structure of the TFIIH transcription complex differs from the NER-TFIIH complex; large movements by XPD/ERCC2 and XPB/ERCC3 are stabilized by XPA which allow this subunit to contact ssDNA. Involved in the regulation of vitamin-D receptor activity. As part of the mitotic spindle-associated MMXD complex it plays a role in chromosome segregation. Might have a role in aging process and could play a causative role in the generation of skin cancers. The polypeptide is General transcription and DNA repair factor IIH helicase subunit XPD (ERCC2) (Homo sapiens (Human)).